A 377-amino-acid chain; its full sequence is MSDSPVLALLKDLISRRSITPSDEGCQQLLISRLEKLGFECEVMIFADTTNLWARRGTEKPLFCFAGHTDVVPTGPEENWTYPPFEPTVVDGFLFGRGAADMKSGIAAFIIALEQFIKAHQDHQGSIALLITSDEEGPFINGTVRVIETLEARNEKIDYCIVGEPSSTEHVGDTIKNGRRGSLTADLTINGVQGHVAYPHMVENPIHTCIGPLTELSQMEWDKGNKYFPPTSFQVTNFNAGTGASNVVPGEAQIQFNFRYSTELTAEMIIARVVAILQKHKLNYQIKWTYNGSPFITQPGSLTNAVSEAIFAVNGLTTELSTSGGTSDARFIAPTGAQVVELGPGNKTIHKVNESVKIADLEELVHIHRLTLEKLLT.

Zn(2+) is bound at residue His-68. Asp-70 is an active-site residue. Asp-101 lines the Zn(2+) pocket. Glu-135 (proton acceptor) is an active-site residue. Residues Glu-136, Glu-164, and His-350 each coordinate Zn(2+).

The protein belongs to the peptidase M20A family. DapE subfamily. As to quaternary structure, homodimer. Requires Zn(2+) as cofactor. It depends on Co(2+) as a cofactor.

It catalyses the reaction N-succinyl-(2S,6S)-2,6-diaminopimelate + H2O = (2S,6S)-2,6-diaminopimelate + succinate. The protein operates within amino-acid biosynthesis; L-lysine biosynthesis via DAP pathway; LL-2,6-diaminopimelate from (S)-tetrahydrodipicolinate (succinylase route): step 3/3. Catalyzes the hydrolysis of N-succinyl-L,L-diaminopimelic acid (SDAP), forming succinate and LL-2,6-diaminopimelate (DAP), an intermediate involved in the bacterial biosynthesis of lysine and meso-diaminopimelic acid, an essential component of bacterial cell walls. The polypeptide is Succinyl-diaminopimelate desuccinylase (Psychromonas ingrahamii (strain DSM 17664 / CCUG 51855 / 37)).